Consider the following 108-residue polypeptide: ATP synthase peripheral stalk subunit F6, mitochondrial (108 aa).

The N-terminal 32 residues, 1-32, are a transit peptide targeting the mitochondrion; the sequence is MTVQRIFRLSSVLRSAVSVHLRRNIGVTAVAF. N6-acetyllysine occurs at positions 41, 46, and 79. Lys-84 and Lys-99 each carry N6-acetyllysine; alternate. Lys-84 and Lys-99 each carry N6-succinyllysine; alternate. The residue at position 105 (Lys-105) is an N6-acetyllysine. Ser-108 carries the phosphoserine modification.

It belongs to the eukaryotic ATPase subunit F6 family. As to quaternary structure, component of the ATP synthase complex composed at least of ATP5F1A/subunit alpha, ATP5F1B/subunit beta, ATP5MC1/subunit c (homooctomer), MT-ATP6/subunit a, MT-ATP8/subunit 8, ATP5ME/subunit e, ATP5MF/subunit f, ATP5MG/subunit g, ATP5MK/subunit k, ATP5MJ/subunit j, ATP5F1C/subunit gamma, ATP5F1D/subunit delta, ATP5F1E/subunit epsilon, ATP5PF/subunit F6, ATP5PB/subunit b, ATP5PD/subunit d, ATP5PO/subunit OSCP. ATP synthase complex consists of a soluble F(1) head domain (subunits alpha(3) and beta(3)) - the catalytic core - and a membrane F(0) domain - the membrane proton channel (subunits c, a, 8, e, f, g, k and j). These two domains are linked by a central stalk (subunits gamma, delta, and epsilon) rotating inside the F1 region and a stationary peripheral stalk (subunits F6, b, d, and OSCP).

It is found in the mitochondrion. The protein resides in the mitochondrion inner membrane. In terms of biological role, subunit F6, of the mitochondrial membrane ATP synthase complex (F(1)F(0) ATP synthase or Complex V) that produces ATP from ADP in the presence of a proton gradient across the membrane which is generated by electron transport complexes of the respiratory chain. ATP synthase complex consist of a soluble F(1) head domain - the catalytic core - and a membrane F(1) domain - the membrane proton channel. These two domains are linked by a central stalk rotating inside the F(1) region and a stationary peripheral stalk. During catalysis, ATP synthesis in the catalytic domain of F(1) is coupled via a rotary mechanism of the central stalk subunits to proton translocation. In vivo, can only synthesize ATP although its ATP hydrolase activity can be activated artificially in vitro. Part of the complex F(0) domain. Part of the complex F(0) domain and the peripheric stalk, which acts as a stator to hold the catalytic alpha(3)beta(3) subcomplex and subunit a/ATP6 static relative to the rotary elements. The chain is ATP synthase peripheral stalk subunit F6, mitochondrial from Rattus norvegicus (Rat).